The chain runs to 613 residues: Leucine-rich repeat receptor-like protein FASCIATED EAR2 (613 aa).

Positions 1 to 28 (MLTATPLPHQLLATFLLVLASATQPAVP) are cleaved as a signal peptide. Residues 29–573 (ASTDRAALLA…WLGGWHGENG (545 aa)) lie on the Extracellular side of the membrane. LRR repeat units lie at residues 79 to 103 (TPSV…PLAL), 104 to 128 (LRRL…LPRS), 130 to 150 (LALD…LPSS), 151 to 176 (LPAL…SFPA), 178 to 199 (LAAL…IVAD), 202 to 226 (NSAL…IAAV), 227 to 250 (RSLQ…IGNL), 251 to 274 (TYLQ…LAGC), 276 to 297 (QLLY…ELDA), 298 to 322 (LASL…LAGC), 324 to 346 (SLEV…VAKW), 347 to 370 (LSLK…MFSF), 372 to 394 (LLQW…GFNV), 435 to 459 (VQAT…LVDM), 460 to 483 (KGLE…LGGM), 484 to 507 (GRLH…IAAM), and 508 to 531 (TVLE…KFPG). N91 carries N-linked (GlcNAc...) asparagine glycosylation. N158 is a glycosylation site (N-linked (GlcNAc...) asparagine). An N-linked (GlcNAc...) asparagine glycan is attached at N249. An N-linked (GlcNAc...) asparagine glycan is attached at N393. N466 carries an N-linked (GlcNAc...) asparagine glycan. N-linked (GlcNAc...) asparagine glycosylation is present at N514. A helical transmembrane segment spans residues 574–597 (WVSLGAFCISTMTSFYVSLATLLC). Residues 598–613 (SSNARNFVFRPVRVEY) lie on the Cytoplasmic side of the membrane.

As to expression, expressed in ear primordia, vegetative apex and young leaf tissues. Barely detected in expanded leaf tissues and not expressed in roots.

Its subcellular location is the cell membrane. In terms of biological role, receptor-like protein that regulates shoot meristem proliferation. Based on additive and synergistic phenotypes of double mutants, it is probable that unlike CLV1 and CLV2 in A.thaliana, FAE2 and TD1 do not function exclusively in a single pathway. The chain is Leucine-rich repeat receptor-like protein FASCIATED EAR2 (FEA2) from Zea mays (Maize).